The chain runs to 177 residues: Ribosome maturation factor RimP (177 aa).

Belongs to the RimP family.

The protein localises to the cytoplasm. Required for maturation of 30S ribosomal subunits. This Streptococcus sanguinis (strain SK36) protein is Ribosome maturation factor RimP.